A 442-amino-acid polypeptide reads, in one-letter code: tRNA-2-methylthio-N(6)-dimethylallyladenosine synthase (442 aa).

The MTTase N-terminal domain maps to 6–122 (RKFYIHTFGC…LPALIAEAGD (117 aa)). 6 residues coordinate [4Fe-4S] cluster: C15, C51, C85, C157, C161, and C164. The Radical SAM core domain maps to 143–373 (RTQSLNAFVP…IDLQNGISAE (231 aa)). Residues 376–439 (GLAPGSVVEV…SATLFGQSAE (64 aa)) enclose the TRAM domain.

It belongs to the methylthiotransferase family. MiaB subfamily. In terms of assembly, monomer. Requires [4Fe-4S] cluster as cofactor.

It localises to the cytoplasm. The catalysed reaction is N(6)-dimethylallyladenosine(37) in tRNA + (sulfur carrier)-SH + AH2 + 2 S-adenosyl-L-methionine = 2-methylsulfanyl-N(6)-dimethylallyladenosine(37) in tRNA + (sulfur carrier)-H + 5'-deoxyadenosine + L-methionine + A + S-adenosyl-L-homocysteine + 2 H(+). In terms of biological role, catalyzes the methylthiolation of N6-(dimethylallyl)adenosine (i(6)A), leading to the formation of 2-methylthio-N6-(dimethylallyl)adenosine (ms(2)i(6)A) at position 37 in tRNAs that read codons beginning with uridine. This Chlorobium phaeobacteroides (strain DSM 266 / SMG 266 / 2430) protein is tRNA-2-methylthio-N(6)-dimethylallyladenosine synthase.